The sequence spans 193 residues: Ribose 1,5-bisphosphate phosphokinase PhnN (193 aa).

Glycine 9–aspartate 16 serves as a coordination point for ATP.

The protein belongs to the ribose 1,5-bisphosphokinase family.

The catalysed reaction is alpha-D-ribose 1,5-bisphosphate + ATP = 5-phospho-alpha-D-ribose 1-diphosphate + ADP. The protein operates within metabolic intermediate biosynthesis; 5-phospho-alpha-D-ribose 1-diphosphate biosynthesis; 5-phospho-alpha-D-ribose 1-diphosphate from D-ribose 5-phosphate (route II): step 3/3. Its function is as follows. Catalyzes the phosphorylation of ribose 1,5-bisphosphate to 5-phospho-D-ribosyl alpha-1-diphosphate (PRPP). The protein is Ribose 1,5-bisphosphate phosphokinase PhnN of Yersinia pestis.